Reading from the N-terminus, the 700-residue chain is Pyrroloquinoline quinone transporter (700 aa).

Positions 1–23 are cleaved as a signal peptide; it reads MKIFSVRQTVLPALLVLSPVVFA. The TBDR plug domain occupies 39-157; the sequence is SELDTPAAVS…SGGVMNVTTQ (119 aa). The next 24 beta stranded transmembrane spans lie at 132 to 136, 150 to 160, 162 to 171, 177 to 186, 195 to 204, 220 to 227, 233 to 241, 280 to 288, 295 to 301, 335 to 344, 350 to 358, 398 to 405, 411 to 419, 447 to 456, 464 to 468, 500 to 509, 511 to 520, 549 to 556, 563 to 570, 597 to 604, 611 to 617, 637 to 647, 651 to 659, and 689 to 697; these read NVEVL, GVMNVTTQTGQ, PPTIEASSYY, WRYGLKATGA, DVDYTVSTTR, LANAKLGV, SKLSLIFNS, QAGLRYERS, MSVMMYA, GIDSRWTHRG, VTFTTGLNY, DPYLQTQW, LSLDAGVRY, WLPAGSLKYA, YLAAG, TIEIGSKTRI, DGLLSLALFQ, GAELAWDQ, RVNASWTW, MGFASIGY, YAGTEAR, LVGLFTGYKYN, LTVDLFGRV, and YGVGMNIAW. The region spanning 162 to 697 is the TBDR beta-barrel domain; the sequence is PPTIEASSYY…NYGVGMNIAW (536 aa). A TonB C-terminal box motif is present at residues 680-700; it reads YYEPSPGRNYGVGMNIAWRFE.

This sequence belongs to the TonB-dependent receptor family.

The protein localises to the cell outer membrane. In terms of biological role, mediates the TonB-dependent high affinity transport across the outer membrane of pyrroloquinoline quinone (PQQ), a redox cofactor required for the activity of Gcd and Asd dehydrogenases. The uptake process is energised via the TonB-ExbBD complex. Not involved in the transport of an iron-containing substrate under laboratory conditions. The protein is Pyrroloquinoline quinone transporter of Escherichia coli (strain K12).